Here is a 242-residue protein sequence, read N- to C-terminus: Uridylate kinase (242 aa).

11 to 14 (KLSG) serves as a coordination point for ATP. Glycine 53 serves as a coordination point for UMP. The ATP site is built by glycine 54 and arginine 58. UMP is bound by residues aspartate 73 and 134 to 141 (SGNPFFTT). ATP-binding residues include threonine 161, tyrosine 167, and aspartate 170.

The protein belongs to the UMP kinase family. As to quaternary structure, homohexamer.

The protein localises to the cytoplasm. The enzyme catalyses UMP + ATP = UDP + ADP. The protein operates within pyrimidine metabolism; CTP biosynthesis via de novo pathway; UDP from UMP (UMPK route): step 1/1. Its activity is regulated as follows. Inhibited by UTP. Its function is as follows. Catalyzes the reversible phosphorylation of UMP to UDP. The sequence is that of Uridylate kinase from Thermosynechococcus vestitus (strain NIES-2133 / IAM M-273 / BP-1).